A 927-amino-acid polypeptide reads, in one-letter code: Isoleucine--tRNA ligase (927 aa).

The short motif at 57-67 (PFANGNIHMGH) is the 'HIGH' region element. Residue glutamate 553 participates in L-isoleucyl-5'-AMP binding. Positions 594 to 598 (KMSKS) match the 'KMSKS' region motif. Lysine 597 is a binding site for ATP. Positions 886, 889, 906, and 909 each coordinate Zn(2+).

This sequence belongs to the class-I aminoacyl-tRNA synthetase family. IleS type 1 subfamily. As to quaternary structure, monomer. Requires Zn(2+) as cofactor.

It localises to the cytoplasm. It catalyses the reaction tRNA(Ile) + L-isoleucine + ATP = L-isoleucyl-tRNA(Ile) + AMP + diphosphate. Its function is as follows. Catalyzes the attachment of isoleucine to tRNA(Ile). As IleRS can inadvertently accommodate and process structurally similar amino acids such as valine, to avoid such errors it has two additional distinct tRNA(Ile)-dependent editing activities. One activity is designated as 'pretransfer' editing and involves the hydrolysis of activated Val-AMP. The other activity is designated 'posttransfer' editing and involves deacylation of mischarged Val-tRNA(Ile). This Lactobacillus helveticus (strain DPC 4571) protein is Isoleucine--tRNA ligase.